A 438-amino-acid polypeptide reads, in one-letter code: Xylose isomerase (438 aa).

Catalysis depends on residues histidine 103 and aspartate 106. Mg(2+) contacts are provided by glutamate 234, glutamate 270, histidine 273, aspartate 298, aspartate 309, aspartate 311, and aspartate 341.

It belongs to the xylose isomerase family. As to quaternary structure, homotetramer. It depends on Mg(2+) as a cofactor.

The protein resides in the cytoplasm. It catalyses the reaction alpha-D-xylose = alpha-D-xylulofuranose. This is Xylose isomerase from Bacteroides thetaiotaomicron (strain ATCC 29148 / DSM 2079 / JCM 5827 / CCUG 10774 / NCTC 10582 / VPI-5482 / E50).